A 241-amino-acid polypeptide reads, in one-letter code: MSTIPFSPKQKPDESTLTDRQRKVLDAIRTHIDEQGFAPSFREIGNAAGLKSPSSVKHQLQVLEDKGFIRMNANKGRAIEVVAGSAPNPEKPSQASEEATSTSNVAEIYQFPAEAIAESHDVPLVGRIAAGVPITAEQHVDDVMRLPERLTGSGTLFMLEVHGDSMVDAAICDGDYVVVREQNSAVNGDIVAALLDDEATVKTFRKENGHVWLMPHNPAYSPIDGTHATIMGKVVTVLRKL.

The segment at residues 41–61 is a DNA-binding region (H-T-H motif); that stretch reads FREIGNAAGLKSPSSVKHQLQ. Catalysis depends on for autocatalytic cleavage activity residues serine 165 and lysine 202.

This sequence belongs to the peptidase S24 family. As to quaternary structure, homodimer.

The enzyme catalyses Hydrolysis of Ala-|-Gly bond in repressor LexA.. Represses a number of genes involved in the response to DNA damage (SOS response), including recA and lexA. In the presence of single-stranded DNA, RecA interacts with LexA causing an autocatalytic cleavage which disrupts the DNA-binding part of LexA, leading to derepression of the SOS regulon and eventually DNA repair. The protein is LexA repressor of Bifidobacterium longum subsp. infantis (strain ATCC 15697 / DSM 20088 / JCM 1222 / NCTC 11817 / S12).